The chain runs to 383 residues: tRNA-specific 2-thiouridylase MnmA (383 aa).

ATP contacts are provided by residues 10–17 and M36; that span reads AMSGGVDS. The Nucleophile role is filled by C107. A disulfide bridge connects residues C107 and C206. G131 serves as a coordination point for ATP. Residues 155 to 157 form an interaction with tRNA region; it reads KDQ. The active-site Cysteine persulfide intermediate is C206. Residues 315–316 are interaction with tRNA; the sequence is RY.

The protein belongs to the MnmA/TRMU family.

It localises to the cytoplasm. It carries out the reaction S-sulfanyl-L-cysteinyl-[protein] + uridine(34) in tRNA + AH2 + ATP = 2-thiouridine(34) in tRNA + L-cysteinyl-[protein] + A + AMP + diphosphate + H(+). Catalyzes the 2-thiolation of uridine at the wobble position (U34) of tRNA, leading to the formation of s(2)U34. The sequence is that of tRNA-specific 2-thiouridylase MnmA from Salinibacter ruber (strain DSM 13855 / M31).